The chain runs to 532 residues: Glutamate--cysteine ligase (532 aa).

Belongs to the glutamate--cysteine ligase type 1 family. Type 1 subfamily.

The enzyme catalyses L-cysteine + L-glutamate + ATP = gamma-L-glutamyl-L-cysteine + ADP + phosphate + H(+). It participates in sulfur metabolism; glutathione biosynthesis; glutathione from L-cysteine and L-glutamate: step 1/2. In Pseudomonas fluorescens (strain ATCC BAA-477 / NRRL B-23932 / Pf-5), this protein is Glutamate--cysteine ligase.